The chain runs to 348 residues: Rhodopsin (348 aa).

Met-1 is subject to N-acetylmethionine. At 1–36 (MNGTEGPNFYVPFSNKTGVVRSPFEYPQYYLAEPWQ) the chain is on the extracellular side. Asn-2 and Asn-15 each carry an N-linked (GlcNAc...) asparagine glycan. A helical membrane pass occupies residues 37–61 (FSMLAAYMFLLIVLGFPINFLTLYV). Residues 62–73 (TVQHKKLRTPLN) are Cytoplasmic-facing. The helical transmembrane segment at 74 to 96 (YILLNLAVADLFMVFGGFTTTLY) threads the bilayer. At 97–110 (TSLHGYFVFGPTGC) the chain is on the extracellular side. The cysteines at positions 110 and 187 are disulfide-linked. A helical transmembrane segment spans residues 111 to 133 (NLEGFFATLGGEIALWSLVVLAI). Residues 134–136 (ERY) carry the 'Ionic lock' involved in activated form stabilization motif. Topologically, residues 134–152 (ERYVVVCKPMSNFRFGENH) are cytoplasmic. The chain crosses the membrane as a helical span at residues 153-173 (AIMGVGLTWVMALACAAPPLV). The Extracellular portion of the chain corresponds to 174 to 202 (GWSRYIPEGMQCSCGIDYYTLKPEVNNES). Zn(2+) is bound at residue Glu-201. Residues 203 to 224 (FVIYMFVVHFTIPMIVIFFCYG) traverse the membrane as a helical segment. Over 225–252 (QLVFTVKEAAAQQQESATTQKAEKEVTR) the chain is Cytoplasmic. Residues 253–274 (MVIIMVIAFLICWVPYASVAFY) form a helical membrane-spanning segment. At 275 to 286 (IFTHQGFNFGPI) the chain is on the extracellular side. Gln-279 is a binding site for Zn(2+). A helical transmembrane segment spans residues 287-308 (FMTLPAFFAKAAAIYNPVIYIM). Lys-296 is subject to N6-(retinylidene)lysine. The Cytoplasmic portion of the chain corresponds to 309–348 (MNKQFRTCMITTLCCGKNPLGDDEVSASASKTETSQVAPA). 2 S-palmitoyl cysteine lipidation sites follow: Cys-322 and Cys-323. Residues 330-348 (DDEVSASASKTETSQVAPA) are interaction with SAG. A phosphoserine mark is found at Ser-334 and Ser-338. Phosphothreonine occurs at positions 340 and 342. Phosphoserine is present on Ser-343.

Belongs to the G-protein coupled receptor 1 family. Opsin subfamily. As to quaternary structure, homodimer. Interacts (phosphorylated form) with SAG. Interacts with GNAT1. Interacts with GNAT3. SAG and G-proteins compete for a common binding site. Interacts with GRK1. Interacts with PRCD; the interaction promotes PRCD stability. Forms a complex with ASAP1 and ARF4. Forms a complex with ASAP1, RAB11A, Rabin8/RAB3IP, ARF4 and RAB11FIP3; the complex regulates Golgi-to-cilia rhodopsin/RHO transport in photoreceptors. In terms of processing, phosphorylated on some or all of the serine and threonine residues present in the C-terminal region. Contains one covalently linked retinal chromophore. Upon light absorption, the covalently bound 11-cis-retinal is converted to all-trans-retinal. After hydrolysis of the Schiff base and release of the covalently bound all-trans-retinal, active rhodopsin is regenerated by binding of a fresh molecule of 11-cis-retinal.

Its subcellular location is the membrane. It localises to the cell projection. The protein resides in the cilium. It is found in the photoreceptor outer segment. Photoreceptor required for image-forming vision at low light intensity. Required for photoreceptor cell viability after birth. Light-induced isomerization of 11-cis to all-trans retinal triggers a conformational change that activates signaling via G-proteins. Subsequent receptor phosphorylation mediates displacement of the bound G-protein alpha subunit by the arrestin SAG and terminates signaling. The protein is Rhodopsin (RHO) of Pagophilus groenlandicus (Harp seal).